The following is a 140-amino-acid chain: Putative pre-16S rRNA nuclease (140 aa).

The protein belongs to the YqgF nuclease family.

Its subcellular location is the cytoplasm. Could be a nuclease involved in processing of the 5'-end of pre-16S rRNA. The protein is Putative pre-16S rRNA nuclease of Enterococcus faecalis (strain ATCC 700802 / V583).